A 634-amino-acid chain; its full sequence is tRNA uridine 5-carboxymethylaminomethyl modification enzyme MnmG (634 aa).

14–19 (GGGHAG) contacts FAD. 279–293 (GPRYCPSIEDKVVRF) provides a ligand contact to NAD(+).

It belongs to the MnmG family. Homodimer. Heterotetramer of two MnmE and two MnmG subunits. The cofactor is FAD.

It localises to the cytoplasm. NAD-binding protein involved in the addition of a carboxymethylaminomethyl (cmnm) group at the wobble position (U34) of certain tRNAs, forming tRNA-cmnm(5)s(2)U34. The polypeptide is tRNA uridine 5-carboxymethylaminomethyl modification enzyme MnmG (Xanthomonas axonopodis pv. citri (strain 306)).